We begin with the raw amino-acid sequence, 274 residues long: Hydroxyacylglutathione hydrolase, cytoplasmic isozyme (274 aa).

His59, His61, Asp63, His64, His121, and Asp144 together coordinate Zn(2+). Residues Arg153 and 188-190 (HEY) contribute to the substrate site. Position 188 (His188) interacts with Zn(2+). The residue at position 257 (Ser257) is a Phosphoserine. Position 268 to 271 (268 to 271 (RAMK)) interacts with substrate.

Belongs to the metallo-beta-lactamase superfamily. Glyoxalase II family. It depends on Zn(2+) as a cofactor.

The protein resides in the cytoplasm. The enzyme catalyses an S-(2-hydroxyacyl)glutathione + H2O = a 2-hydroxy carboxylate + glutathione + H(+). It carries out the reaction (R)-S-lactoylglutathione + H2O = (R)-lactate + glutathione + H(+). The protein operates within secondary metabolite metabolism; methylglyoxal degradation; (R)-lactate from methylglyoxal: step 2/2. Inhibited by various thiol compounds such as glutathione and coenzyme A. In terms of biological role, thiolesterase that catalyzes the hydrolysis of S-D-lactoylglutathione to form glutathione and D-lactic acid. Involved in the metabolism of methylglyoxal, a toxic compound for yeast proliferation, by converting methylglyoxal to lactate via S-D-lactoylglutathione by sequential enzyme reactions catalyzed by glyoxalase I and glyoxalase II. This is Hydroxyacylglutathione hydrolase, cytoplasmic isozyme from Saccharomyces cerevisiae (strain ATCC 204508 / S288c) (Baker's yeast).